The chain runs to 301 residues: Probable alpha-L-glutamate ligase (301 aa).

The ATP-grasp domain occupies 104 to 287; the sequence is LQLLSRKGIG…VAGIIIEYLE (184 aa). ATP contacts are provided by residues Lys141, 178 to 179, Asp187, and 211 to 213; these read EY and RSN. Mg(2+) is bound by residues Asp248, Glu260, and Asn262. Residues Asp248, Glu260, and Asn262 each contribute to the Mn(2+) site.

This sequence belongs to the RimK family. The cofactor is Mg(2+). Mn(2+) serves as cofactor.

The polypeptide is Probable alpha-L-glutamate ligase (Azotobacter vinelandii (strain DJ / ATCC BAA-1303)).